Here is a 98-residue protein sequence, read N- to C-terminus: Large ribosomal subunit protein uL23 (98 aa).

This sequence belongs to the universal ribosomal protein uL23 family. In terms of assembly, part of the 50S ribosomal subunit. Contacts protein L29, and trigger factor when it is bound to the ribosome.

One of the early assembly proteins it binds 23S rRNA. One of the proteins that surrounds the polypeptide exit tunnel on the outside of the ribosome. Forms the main docking site for trigger factor binding to the ribosome. The chain is Large ribosomal subunit protein uL23 from Borreliella afzelii (strain PKo) (Borrelia afzelii).